Reading from the N-terminus, the 228-residue chain is Cytidylate kinase (228 aa).

17–25 is a binding site for ATP; the sequence is GPTASGKGT.

This sequence belongs to the cytidylate kinase family. Type 1 subfamily.

It is found in the cytoplasm. It carries out the reaction CMP + ATP = CDP + ADP. The enzyme catalyses dCMP + ATP = dCDP + ADP. This is Cytidylate kinase from Burkholderia thailandensis (strain ATCC 700388 / DSM 13276 / CCUG 48851 / CIP 106301 / E264).